Consider the following 2150-residue polypeptide: Zinc finger protein sdc-3 (2150 aa).

The segment at 443-987 (QEITSPMFAL…DQVENEEPER (545 aa)) is dosage compensation domain 1. Disordered regions lie at residues 874-894 (EKEW…EEED), 1261-1373 (GSVV…GPEV), 1411-1448 (FETS…GPIN), and 1491-1670 (EVLQ…SEKL). The span at 1267-1293 (TNQQEENVTSEGPTLQEGSSIPSSSHI) shows a compositional bias: polar residues. Residues 1321 to 1333 (KKSGKTTRGRPKK) show a composition bias toward basic residues. Positions 1347 to 1357 (GQKEEAAHEPE) are enriched in basic and acidic residues. A compositionally biased stretch (basic residues) spans 1504–1524 (SSKKRGRRRKKTPPHIAKARK). Positions 1508–1516 (RGRRRKKTP) are sex determination domain. Residues 1585-1598 (EDLHETERPGHVGE) are compositionally biased toward basic and acidic residues. The segment covering 1638 to 1648 (IQSQAGTNASP) has biased composition (polar residues). C2H2-type zinc fingers lie at residues 2078 to 2105 (HKCV…GKLH) and 2117 to 2141 (DDCQ…NHHH). The dosage compensation domain 2 stretch occupies residues 2080–2105 (CVQCSIRNQSVYFSSYSLLELHGKLH).

In terms of assembly, component of the SDC complex, which consists of sdc-1, sdc-2 and sdc-3. Within the complex, interacts with sdc-1 and sdc-2. Interacts with dpy-21. Post-translationally, sumoylated. Sumoylation is important for assembly of the dosage compensation complex and its robust binding to the X chromosome. In terms of tissue distribution, expressed in somatic and in germline tissues in hermaphrodites (XX). In males (XO), only present in embryos younger than the 100-cell stage (at protein level).

The protein localises to the chromosome. The protein resides in the nucleus. In terms of biological role, component of the SDC complex that functions in sex determination and in X chromosome dosage compensation specifically in hermaphrodite (XX) animals. Plays a central role in the recruitment of the condensin I-like dosage compensation complex to the male sex-determining autosomal gene her-1, thereby contributing to its repression and initiating hermaphrodite sexual development. Involved in the recruitment and assembly of the dosage compensation complex and the dosage compensation protein dpy-21 onto the X chromosomes in hermaphrodites, which leads to a reduction of X-linked gene transcription and an equalization of X-linked gene expression between the sexes. This Caenorhabditis elegans protein is Zinc finger protein sdc-3 (sdc-3).